Reading from the N-terminus, the 589-residue chain is PTS system mannitol-specific EIICB component (589 aa).

The Cytoplasmic portion of the chain corresponds to 1–25 (MEEKVSLKVRVQKLGTSLSNMVMPN). Residues 14–347 (LGTSLSNMVM…LHADKSTEDS (334 aa)) enclose the PTS EIIC type-2 domain. A helical transmembrane segment spans residues 26–47 (IGAFIAWGVLTALFIADGYLPN). At 48–51 (EQLA) the chain is on the extracellular side. The chain crosses the membrane as a helical span at residues 52-72 (TVVGPMLTYLLPILIGYTGGY). At 73 to 135 (MIHGQRGAVV…PGFEMLVNNF (63 aa)) the chain is on the cytoplasmic side. A helical membrane pass occupies residues 136-157 (SAGLVGFALLLLAFYAIGPVVS). Residues 158-166 (TLTGAVGNG) are Extracellular-facing. Residues 167 to 187 (VEAIVNARLLPMANIIIEPAK) traverse the membrane as a helical segment. At 188–274 (VLFLNNALNH…VMMKPTLFLA (87 aa)) the chain is on the cytoplasmic side. Residues 275–294 (AMAGGISGTFTFQLLDAGLK) traverse the membrane as a helical segment. Over 295–316 (SPASPGSIIAIIATAPKGVWPH) the chain is Extracellular. A helical transmembrane segment spans residues 317 to 338 (LNVLLGVLVAAVVSFLVAALIL). At 339–589 (HADKSTEDSL…YDKMAARMYK (251 aa)) the chain is on the cytoplasmic side. One can recognise a PTS EIIB type-2 domain in the interval 381-476 (EKIIFACDAG…SLTGASPIAE (96 aa)). Residue Cys-387 is the Phosphocysteine intermediate; for EIIB activity of the active site. Cys-387 carries the phosphocysteine; by EIIA modification.

In terms of assembly, homodimer.

The protein localises to the cell membrane. The enzyme catalyses D-mannitol(out) + N(pros)-phospho-L-histidyl-[protein] = D-mannitol 1-phosphate(in) + L-histidyl-[protein]. In terms of biological role, the phosphoenolpyruvate-dependent sugar phosphotransferase system (sugar PTS), a major carbohydrate active transport system, catalyzes the phosphorylation of incoming sugar substrates concomitantly with their translocation across the cell membrane. The enzyme II CmtAB PTS system is involved in D-mannitol transport. The polypeptide is PTS system mannitol-specific EIICB component (mtlA) (Streptococcus pneumoniae serotype 4 (strain ATCC BAA-334 / TIGR4)).